The primary structure comprises 899 residues: Origin recognition complex subunit 5 (899 aa).

Disordered regions lie at residues 27–47, 100–166, and 194–238; these read FSSPKKSRKESPIFVQNNDDT, DRIN…EYKD, and KNLE…DGNL. Acidic residues predominate over residues 105–160; it reads SEEETNINDDNNDDNNGDYDDDNNSDDDDDNDDNNNNDDNNNDDDEDVDDFEDIKE. Positions 207 to 218 are enriched in low complexity; that stretch reads SSDNSMTSSSEE. A compositionally biased stretch (basic and acidic residues) spans 227-237; it reads ESDKESDKDGN. Residue 303–310 coordinates ATP; sequence GLPGMGKT. The segment at 409 to 469 is disordered; the sequence is KRTTENIRSP…NNNSNNVRFN (61 aa). The span at 455-469 shows a compositional bias: low complexity; that stretch reads KNNFNNNNSNNVRFN.

This sequence belongs to the ORC5 family. As to quaternary structure, component of the origin recognition complex (ORC). Interacts with PCNA1; the interaction occurs during the trophozoite stage but not at the late schizont stage.

It is found in the nucleus. It catalyses the reaction ATP + H2O = ADP + phosphate + H(+). Functionally, component of the origin recognition complex (ORC) that binds origins of replication. In Plasmodium falciparum (isolate 3D7), this protein is Origin recognition complex subunit 5.